An 81-amino-acid chain; its full sequence is MAKTVLGIHVTFLTLLFAVILLNDVMYTPVEKICERASGTWKGICIHSNDCNNQCVKWENAGSGSCHYQFPNYMCFCYFNC.

The signal sequence occupies residues 1-31 (MAKTVLGIHVTFLTLLFAVILLNDVMYTPVE). 4 cysteine pairs are disulfide-bonded: cysteine 34/cysteine 81, cysteine 45/cysteine 66, cysteine 51/cysteine 75, and cysteine 55/cysteine 77.

In terms of biological role, antimicrobial peptide probably active against fungi like B.sorokiniana, F.oxysporum, F.graminearum, F.avenaceum, B.cinerea, P.beta, P.infestans and P.debaryanum. This is Antimicrobial peptide D2 from Stellaria media (Common chickweed).